The chain runs to 460 residues: UDP-N-acetylmuramate--L-alanine ligase (460 aa).

118-124 (GAHGKTT) provides a ligand contact to ATP.

This sequence belongs to the MurCDEF family.

The protein localises to the cytoplasm. It catalyses the reaction UDP-N-acetyl-alpha-D-muramate + L-alanine + ATP = UDP-N-acetyl-alpha-D-muramoyl-L-alanine + ADP + phosphate + H(+). It functions in the pathway cell wall biogenesis; peptidoglycan biosynthesis. Functionally, cell wall formation. This is UDP-N-acetylmuramate--L-alanine ligase from Clostridium botulinum (strain Eklund 17B / Type B).